The chain runs to 301 residues: Acetylglutamate kinase (301 aa).

Substrate is bound by residues 72 to 73 (GG), Arg-94, and Asn-199.

The protein belongs to the acetylglutamate kinase family. ArgB subfamily.

The protein localises to the cytoplasm. The catalysed reaction is N-acetyl-L-glutamate + ATP = N-acetyl-L-glutamyl 5-phosphate + ADP. It participates in amino-acid biosynthesis; L-arginine biosynthesis; N(2)-acetyl-L-ornithine from L-glutamate: step 2/4. Functionally, catalyzes the ATP-dependent phosphorylation of N-acetyl-L-glutamate. The polypeptide is Acetylglutamate kinase (Bartonella quintana (strain Toulouse) (Rochalimaea quintana)).